The chain runs to 102 residues: Large ribosomal subunit protein bL21 (102 aa).

The segment covering 80–91 has biased composition (basic residues); sequence KNSKRKKGHRQP. Residues 80 to 102 form a disordered region; sequence KNSKRKKGHRQPYTKLTIDKINA.

The protein belongs to the bacterial ribosomal protein bL21 family. In terms of assembly, part of the 50S ribosomal subunit. Contacts protein L20.

This protein binds to 23S rRNA in the presence of protein L20. This Staphylococcus aureus (strain Mu3 / ATCC 700698) protein is Large ribosomal subunit protein bL21.